The primary structure comprises 605 residues: Elongation factor 4 (605 aa).

Positions 9–192 (GMIRNFCIIA…AIVARVPAPA (184 aa)) constitute a tr-type G domain. GTP is bound by residues 21–26 (DHGKST) and 139–142 (NKID).

The protein belongs to the TRAFAC class translation factor GTPase superfamily. Classic translation factor GTPase family. LepA subfamily.

It localises to the cell inner membrane. The catalysed reaction is GTP + H2O = GDP + phosphate + H(+). Its function is as follows. Required for accurate and efficient protein synthesis under certain stress conditions. May act as a fidelity factor of the translation reaction, by catalyzing a one-codon backward translocation of tRNAs on improperly translocated ribosomes. Back-translocation proceeds from a post-translocation (POST) complex to a pre-translocation (PRE) complex, thus giving elongation factor G a second chance to translocate the tRNAs correctly. Binds to ribosomes in a GTP-dependent manner. The sequence is that of Elongation factor 4 from Chlorobaculum tepidum (strain ATCC 49652 / DSM 12025 / NBRC 103806 / TLS) (Chlorobium tepidum).